The sequence spans 312 residues: Pantothenate kinase (312 aa).

An ATP-binding site is contributed by 97-104; that stretch reads GSVAVGKS.

The protein belongs to the prokaryotic pantothenate kinase family.

It is found in the cytoplasm. The enzyme catalyses (R)-pantothenate + ATP = (R)-4'-phosphopantothenate + ADP + H(+). It functions in the pathway cofactor biosynthesis; coenzyme A biosynthesis; CoA from (R)-pantothenate: step 1/5. This chain is Pantothenate kinase, found in Mycolicibacterium smegmatis (strain ATCC 700084 / mc(2)155) (Mycobacterium smegmatis).